The following is a 533-amino-acid chain: WD repeat-containing protein PAC11 (533 aa).

The segment covering 1–19 (MERLKQLEEKRRQLKELRE) has biased composition (basic and acidic residues). The tract at residues 1–36 (MERLKQLEEKRRQLKELRERRKQASLFPGSETMGHH) is disordered. WD repeat units follow at residues 380–422 (FDEV…YLSL) and 432–475 (NHST…AIIG).

As to quaternary structure, interacts with NUM1, when DYN1 is present.

The protein resides in the cytoplasm. Its subcellular location is the cytoskeleton. In terms of biological role, required for viability in the absence of the kinesin-related CIN8 mitotic motor. May be a dynein intermediate chain. The protein is WD repeat-containing protein PAC11 (PAC11) of Saccharomyces cerevisiae (strain ATCC 204508 / S288c) (Baker's yeast).